The sequence spans 243 residues: Carboxy-S-adenosyl-L-methionine synthase (243 aa).

S-adenosyl-L-methionine is bound by residues Y40, 65 to 67 (GCS), 90 to 91 (DN), 118 to 119 (DI), N133, and R200.

Belongs to the class I-like SAM-binding methyltransferase superfamily. Cx-SAM synthase family. In terms of assembly, homodimer.

The catalysed reaction is prephenate + S-adenosyl-L-methionine = carboxy-S-adenosyl-L-methionine + 3-phenylpyruvate + H2O. Functionally, catalyzes the conversion of S-adenosyl-L-methionine (SAM) to carboxy-S-adenosyl-L-methionine (Cx-SAM). The polypeptide is Carboxy-S-adenosyl-L-methionine synthase (Shewanella sp. (strain W3-18-1)).